The following is a 121-amino-acid chain: ATP synthase epsilon chain (121 aa).

This sequence belongs to the ATPase epsilon chain family. F-type ATPases have 2 components, CF(1) - the catalytic core - and CF(0) - the membrane proton channel. CF(1) has five subunits: alpha(3), beta(3), gamma(1), delta(1), epsilon(1). CF(0) has three main subunits: a, b and c.

It localises to the cell membrane. In terms of biological role, produces ATP from ADP in the presence of a proton gradient across the membrane. In Mycobacterium marinum (strain ATCC BAA-535 / M), this protein is ATP synthase epsilon chain.